A 100-amino-acid polypeptide reads, in one-letter code: Urease subunit gamma (100 aa).

The protein belongs to the urease gamma subunit family. As to quaternary structure, heterotrimer of UreA (gamma), UreB (beta) and UreC (alpha) subunits. Three heterotrimers associate to form the active enzyme.

The protein localises to the cytoplasm. It catalyses the reaction urea + 2 H2O + H(+) = hydrogencarbonate + 2 NH4(+). The protein operates within nitrogen metabolism; urea degradation; CO(2) and NH(3) from urea (urease route): step 1/1. This chain is Urease subunit gamma, found in Pseudomonas syringae pv. tomato (strain ATCC BAA-871 / DC3000).